The primary structure comprises 361 residues: tRNA N6-adenosine threonylcarbamoyltransferase (361 aa).

Fe cation is bound by residues H110 and H114. Substrate contacts are provided by residues 132–136, D165, G178, D182, and N289; that span reads LVSGG. D317 contacts Fe cation.

It belongs to the KAE1 / TsaD family. Requires Fe(2+) as cofactor.

Its subcellular location is the cytoplasm. The enzyme catalyses L-threonylcarbamoyladenylate + adenosine(37) in tRNA = N(6)-L-threonylcarbamoyladenosine(37) in tRNA + AMP + H(+). Functionally, required for the formation of a threonylcarbamoyl group on adenosine at position 37 (t(6)A37) in tRNAs that read codons beginning with adenine. Is involved in the transfer of the threonylcarbamoyl moiety of threonylcarbamoyl-AMP (TC-AMP) to the N6 group of A37, together with TsaE and TsaB. TsaD likely plays a direct catalytic role in this reaction. This chain is tRNA N6-adenosine threonylcarbamoyltransferase, found in Nitratidesulfovibrio vulgaris (strain ATCC 29579 / DSM 644 / CCUG 34227 / NCIMB 8303 / VKM B-1760 / Hildenborough) (Desulfovibrio vulgaris).